We begin with the raw amino-acid sequence, 156 residues long: Oxidized purine nucleoside triphosphate hydrolase (156 aa).

A Nudix hydrolase domain is found at 3–132 (TSKLLTLVLV…WFPLMLQKKR (130 aa)). Position 8 (Thr8) interacts with 2-oxo-dATP. O(6)-methyl-dGMP is bound by residues Thr8, Lys23, Asn33, and 35–38 (FGGK). Lys23 is an 8-oxo-dGTP binding site. Residues Asn33 and 35 to 38 (FGGK) each bind 2-oxo-dATP. 5 residues coordinate Mg(2+): Gly36, Glu52, Glu55, Glu56, and Glu100. Residues 37 to 58 (GKVQTGETIEQAARRELLEESG) carry the Nudix box motif. Residue 117–120 (WADD) participates in 2-oxo-dATP binding. An O(6)-methyl-dGMP-binding site is contributed by 117–120 (WADD).

Belongs to the Nudix hydrolase family. In terms of assembly, monomer. Mg(2+) is required as a cofactor.

The protein localises to the cytoplasm. It localises to the cytosol. It is found in the mitochondrion matrix. Its subcellular location is the nucleus. The catalysed reaction is 2-oxo-dATP + H2O = 2-oxo-dAMP + diphosphate + H(+). The enzyme catalyses 2-oxo-ATP + H2O = 2-oxo-AMP + diphosphate + H(+). It catalyses the reaction 8-oxo-dGTP + H2O = 8-oxo-dGMP + diphosphate + H(+). It carries out the reaction 8-oxo-dATP + H2O = 8-oxo-dAMP + diphosphate + H(+). The catalysed reaction is O(6)-methyl-dGTP + H2O = O(6)-methyl-dGMP + diphosphate + H(+). The enzyme catalyses N(6)-methyl-dATP + H2O = N(6)-methyl-dAMP + diphosphate + H(+). It catalyses the reaction N(6)-methyl-ATP + H2O = N(6)-methyl-AMP + diphosphate + H(+). Inhibited by TH588. Oxidized purine nucleoside triphosphate hydrolase which is a prominent sanitizer of the oxidized nucleotide pool. Catalyzes the hydrolysis of 2-oxo-dATP (2-hydroxy-dATP) into 2-oxo-dAMP. Also has a significant hydrolase activity toward 2-oxo-ATP, 8-oxo-dGTP and 8-oxo-dATP. Through the hydrolysis of oxidized purine nucleoside triphosphates, prevents their incorporation into DNA and the subsequent transversions A:T to C:G and G:C to T:A. Also catalyzes the hydrolysis of methylated purine nucleoside triphosphate preventing their integration into DNA. Through this antimutagenic activity protects cells from oxidative stress. The chain is Oxidized purine nucleoside triphosphate hydrolase (nudt1) from Danio rerio (Zebrafish).